A 102-amino-acid chain; its full sequence is Small ribosomal subunit protein uS10 (102 aa).

Belongs to the universal ribosomal protein uS10 family. As to quaternary structure, part of the 30S ribosomal subunit.

Involved in the binding of tRNA to the ribosomes. The chain is Small ribosomal subunit protein uS10 from Methanothermobacter thermautotrophicus (strain ATCC 29096 / DSM 1053 / JCM 10044 / NBRC 100330 / Delta H) (Methanobacterium thermoautotrophicum).